Consider the following 263-residue polypeptide: Antigen 10-3 (263 aa).

Positions 1-21 (MNIYLIGILCIVGLIISQGST) are cleaved as a signal peptide. The tract at residues 70-207 (GNKKDKQPTQ…QINDGTSDKP (138 aa)) is disordered. Low complexity predominate over residues 78-90 (TQKTTPKPTTPKQ). Repeat copies occupy residues 81-107 (TTPK…TIKR), 108-134 (TTPK…TIKR), 135-161 (TTPK…TIKR), 162-188 (TTPK…TIKR), and 189-206 (TTPK…TSDK). The 5 X 27 AA tandem repeats stretch occupies residues 81–189 (TTPKPTTPKQ…TSDTHTIKRT (109 aa)). Composition is skewed to basic and acidic residues over residues 95-104 (TSDKTSDTHT), 122-131 (TSDKTSDTHT), 149-158 (TSDKTSDTHT), and 176-185 (TSDKTSDTHT).

This is Antigen 10-3 from Schistosoma mansoni (Blood fluke).